We begin with the raw amino-acid sequence, 39 residues long: Photosystem II reaction center protein L (39 aa).

The helical transmembrane segment at 18–38 (SLYLGLLVVFTTGILFSSYFF) threads the bilayer.

It belongs to the PsbL family. In terms of assembly, PSII is composed of 1 copy each of membrane proteins PsbA, PsbB, PsbC, PsbD, PsbE, PsbF, PsbH, PsbI, PsbJ, PsbK, PsbL, PsbM, PsbT, PsbX, PsbY, PsbZ, Psb30/Ycf12, peripheral proteins PsbO, CyanoQ (PsbQ), PsbU, PsbV and a large number of cofactors. It forms dimeric complexes.

It localises to the cellular thylakoid membrane. Functionally, one of the components of the core complex of photosystem II (PSII). PSII is a light-driven water:plastoquinone oxidoreductase that uses light energy to abstract electrons from H(2)O, generating O(2) and a proton gradient subsequently used for ATP formation. It consists of a core antenna complex that captures photons, and an electron transfer chain that converts photonic excitation into a charge separation. This subunit is found at the monomer-monomer interface and is required for correct PSII assembly and/or dimerization. The protein is Photosystem II reaction center protein L of Synechococcus sp. (strain WH7803).